Here is a 181-residue protein sequence, read N- to C-terminus: Translation initiation factor IF-3 (181 aa).

This sequence belongs to the IF-3 family. In terms of assembly, monomer.

The protein localises to the cytoplasm. Its function is as follows. IF-3 binds to the 30S ribosomal subunit and shifts the equilibrium between 70S ribosomes and their 50S and 30S subunits in favor of the free subunits, thus enhancing the availability of 30S subunits on which protein synthesis initiation begins. This is Translation initiation factor IF-3 from Cereibacter sphaeroides (strain ATCC 17023 / DSM 158 / JCM 6121 / CCUG 31486 / LMG 2827 / NBRC 12203 / NCIMB 8253 / ATH 2.4.1.) (Rhodobacter sphaeroides).